The chain runs to 441 residues: tRNA(Ile)-lysidine synthase (441 aa).

27–32 contributes to the ATP binding site; it reads SGGVDS.

Belongs to the tRNA(Ile)-lysidine synthase family.

It localises to the cytoplasm. It catalyses the reaction cytidine(34) in tRNA(Ile2) + L-lysine + ATP = lysidine(34) in tRNA(Ile2) + AMP + diphosphate + H(+). Its function is as follows. Ligates lysine onto the cytidine present at position 34 of the AUA codon-specific tRNA(Ile) that contains the anticodon CAU, in an ATP-dependent manner. Cytidine is converted to lysidine, thus changing the amino acid specificity of the tRNA from methionine to isoleucine. The chain is tRNA(Ile)-lysidine synthase from Proteus mirabilis (strain HI4320).